A 270-amino-acid chain; its full sequence is MKKEIIVYTISDSLGETSQKLLAAASAQYPDISFLNRYNFSFVTTEEELLEILKDALKDKALVVSTLVSKQLITAAKEFSERTGLLYLDLMAPFFELIQAKAGVDPIEEPGRRHQLDRAYFDKISAIEFAVKYDDGKNPQGFLDSDILLLGVSRTSKTPVSMYLANQGYRVSNLPLIPEVPLPPILEEMDPQKMIGLVCSPETLGQIRSSRLASLGLGNETSYTNVERIEQELAYAEEIFAKYGIPVIDVTAKSVEETAFLIKEKLDERN.

151 to 158 is a binding site for ADP; the sequence is GVSRTSKT.

Belongs to the pyruvate, phosphate/water dikinase regulatory protein family. PDRP subfamily.

It catalyses the reaction N(tele)-phospho-L-histidyl/L-threonyl-[pyruvate, phosphate dikinase] + ADP = N(tele)-phospho-L-histidyl/O-phospho-L-threonyl-[pyruvate, phosphate dikinase] + AMP + H(+). The catalysed reaction is N(tele)-phospho-L-histidyl/O-phospho-L-threonyl-[pyruvate, phosphate dikinase] + phosphate + H(+) = N(tele)-phospho-L-histidyl/L-threonyl-[pyruvate, phosphate dikinase] + diphosphate. In terms of biological role, bifunctional serine/threonine kinase and phosphorylase involved in the regulation of the pyruvate, phosphate dikinase (PPDK) by catalyzing its phosphorylation/dephosphorylation. The sequence is that of Putative pyruvate, phosphate dikinase regulatory protein 1 from Enterococcus faecalis (strain ATCC 700802 / V583).